The following is a 209-amino-acid chain: V-type ATP synthase subunit D (209 aa).

This sequence belongs to the V-ATPase D subunit family.

In terms of biological role, produces ATP from ADP in the presence of a proton gradient across the membrane. The chain is V-type ATP synthase subunit D from Anaeromyxobacter dehalogenans (strain 2CP-1 / ATCC BAA-258).